The sequence spans 154 residues: Prefoldin subunit 2 (154 aa).

The span at 124 to 139 shows a compositional bias: basic and acidic residues; that stretch reads IRLMGEDEKPAAKENS. The tract at residues 124 to 154 is disordered; sequence IRLMGEDEKPAAKENSEGAGAKASSAGVLVS. Over residues 140–154 the composition is skewed to low complexity; it reads EGAGAKASSAGVLVS.

Belongs to the prefoldin subunit beta family. Heterohexamer of two PFD-alpha type and four PFD-beta type subunits. Component of the PAQosome complex which is responsible for the biogenesis of several protein complexes and which consists of R2TP complex members RUVBL1, RUVBL2, RPAP3 and PIH1D1, URI complex members PFDN2, PFDN6, PDRG1, UXT and URI1 as well as ASDURF, POLR2E and DNAAF10/WDR92. Interacts with URI1; the interaction is phosphorylation-dependent and occurs in a growth-dependent manner.

The protein localises to the nucleus. Its subcellular location is the cytoplasm. The protein resides in the mitochondrion. Functionally, binds specifically to cytosolic chaperonin (c-CPN) and transfers target proteins to it. Binds to nascent polypeptide chain and promotes folding in an environment in which there are many competing pathways for nonnative proteins. The polypeptide is Prefoldin subunit 2 (PFDN2) (Homo sapiens (Human)).